Consider the following 83-residue polypeptide: Hepcidin (83 aa).

An N-terminal signal peptide occupies residues 1 to 23 (MALSTRTQAACLLLLLLASLSST). A propeptide spanning residues 24–53 (TYLHQQMRQTTELQPLHGEESRADIAIPMQ) is cleaved from the precursor. Disulfide bonds link cysteine 65-cysteine 81, cysteine 68-cysteine 71, cysteine 69-cysteine 77, and cysteine 72-cysteine 80.

Belongs to the hepcidin family. Interacts with SLC40A1; this interaction promotes SLC40A1 rapid ubiquitination. In terms of tissue distribution, highly expressed in the liver and to a much lesser extent in the heart. Secreted in blood.

It localises to the secreted. Its function is as follows. Liver-produced hormone that constitutes the main circulating regulator of iron absorption and distribution across tissues. Acts by promoting endocytosis and degradation of SLC40A1, leading to the retention of iron in iron-exporting cells and decreased flow of iron into plasma. Controls the major flows of iron into plasma: absorption of dietary iron in the intestine, recycling of iron by macrophages, which phagocytose old erythrocytes and other cells, and mobilization of stored iron from hepatocytes. The polypeptide is Hepcidin (Hamp) (Mus musculus (Mouse)).